The primary structure comprises 337 residues: D-alanine--D-alanine ligase (337 aa).

An ATP-grasp domain is found at 124–330 (KMWFSALGIP…FTEYLSLVIN (207 aa)). 154–209 (ALAQWGSIFVKAASQGSSVGCYKVDDSAKVAGVLKDAFGYAPYVIVEKTIKARELE) provides a ligand contact to ATP. Mg(2+)-binding residues include Asp-284, Glu-297, and Asn-299.

Belongs to the D-alanine--D-alanine ligase family. The cofactor is Mg(2+). Mn(2+) serves as cofactor.

Its subcellular location is the cytoplasm. It catalyses the reaction 2 D-alanine + ATP = D-alanyl-D-alanine + ADP + phosphate + H(+). The protein operates within cell wall biogenesis; peptidoglycan biosynthesis. In terms of biological role, cell wall formation. This Shewanella baltica (strain OS185) protein is D-alanine--D-alanine ligase.